The chain runs to 159 residues: Phosphopantetheine adenylyltransferase (159 aa).

Residue Thr10 coordinates substrate. ATP-binding positions include 10–11 and His18; that span reads TF. The substrate site is built by Lys42, Met74, and Arg88. Residues 89-91, Glu99, and 124-130 each bind ATP; these read GLR and WSFISSS.

It belongs to the bacterial CoaD family. In terms of assembly, homohexamer. It depends on Mg(2+) as a cofactor.

Its subcellular location is the cytoplasm. The catalysed reaction is (R)-4'-phosphopantetheine + ATP + H(+) = 3'-dephospho-CoA + diphosphate. Its pathway is cofactor biosynthesis; coenzyme A biosynthesis; CoA from (R)-pantothenate: step 4/5. In terms of biological role, reversibly transfers an adenylyl group from ATP to 4'-phosphopantetheine, yielding dephospho-CoA (dPCoA) and pyrophosphate. The polypeptide is Phosphopantetheine adenylyltransferase (Yersinia pseudotuberculosis serotype I (strain IP32953)).